We begin with the raw amino-acid sequence, 185 residues long: uncharacterized protein (185 aa).

Helical transmembrane passes span 1-21 and 111-131; these read MMKF…LTPE and FLWI…AFAW.

The protein to A.aeolicus aq_1900.

The protein resides in the cell membrane. This is an uncharacterized protein from Aquifex aeolicus (strain VF5).